A 175-amino-acid chain; its full sequence is RNA pyrophosphohydrolase (175 aa).

The region spanning 6–149 is the Nudix hydrolase domain; that stretch reads GYRPNVGIVI…KRDVYRRVMK (144 aa). The Nudix box signature appears at 38-59; it reads GGINPGETPEQAMYRELFEEVG.

It belongs to the Nudix hydrolase family. RppH subfamily. A divalent metal cation is required as a cofactor.

Functionally, accelerates the degradation of transcripts by removing pyrophosphate from the 5'-end of triphosphorylated RNA, leading to a more labile monophosphorylated state that can stimulate subsequent ribonuclease cleavage. The polypeptide is RNA pyrophosphohydrolase (Yersinia pseudotuberculosis serotype O:1b (strain IP 31758)).